The sequence spans 234 residues: Transmembrane protein 65 (234 aa).

The N-terminal 55 residues, 1-55, are a transit peptide targeting the mitochondrion; that stretch reads MSRLLPLLGSRTARSLRPGPAAAPRLPSWCCCGRGLLALGVPGGPRLLGTHPKKE. Topologically, residues 56 to 110 are cytoplasmic; it reads PMEALNTAQGARDFIYSLHSTERSCLLKELHRFESIAIAQEKLEALPPTPGQLRY. A helical membrane pass occupies residues 111 to 131; sequence VFFHNAIPFVGFGFLDNAIMI. Topologically, residues 132–138 are extracellular; that stretch reads VAGTQIE. A helical transmembrane segment spans residues 139-159; that stretch reads LSIGIILGISTMAAAALGNLV. Over 160–203 the chain is Cytoplasmic; sequence SDLAGLGLAGYVEALASRLGLSIPDLTPKQVDMWQTRVSTHLGK. Residues 204-224 form a helical membrane-spanning segment; sequence AVGVTIGCILGMFPLIFFGGS. Residues 225–234 lie on the Extracellular side of the membrane; sequence EEDEKLETTN.

Monomer. Homodimer. Interacts with GJA1. Interacts weakly with DSP. Interacts with SCN1B. As to expression, predominantly expressed in the ventricular tissue (at protein level).

The protein resides in the cell membrane. It is found in the mitochondrion inner membrane. In terms of biological role, essential for maintaining proper cardiac intercalated disk (ICD) structure and function as well as cardiac conduction velocity in the heart. Its association with SCN1B is required for stabilizing the perinexus in the ICD and for localization of GJA1 and SCN5A to the ICD. May regulate the function of the gap junction protein GJA1 and may contribute to the stability and proper localization of GJA1 to cardiac intercalated disk thereby regulating gap junction communication. Regulates mitochondrial respiration and mitochondrial DNA copy number maintenance. In Mus musculus (Mouse), this protein is Transmembrane protein 65 (Tmem65).